We begin with the raw amino-acid sequence, 319 residues long: Replication factor C small subunit (319 aa).

Glycine 45 to threonine 52 contributes to the ATP binding site.

This sequence belongs to the activator 1 small subunits family. RfcS subfamily. Heteropentamer composed of four small subunits (RfcS) and one large subunit (RfcL). Both subunits interact with PCNA.

Its function is as follows. Part of the RFC clamp loader complex which loads the PCNA sliding clamp onto DNA. The complex possesses DNA-dependent ATPase activity which is further stimulated by PCNA. The sequence is that of Replication factor C small subunit (rfcS) from Archaeoglobus fulgidus (strain ATCC 49558 / DSM 4304 / JCM 9628 / NBRC 100126 / VC-16).